The chain runs to 72 residues: Protein kish-A (72 aa).

A signal peptide spans 1 to 26; it reads MSAIFNFQSLLIVILLLICTCAYLRS. Over 27–53 the chain is Extracellular; the sequence is LVPNLLDKNKTGVLGIFWKCARIGERK. An N-linked (GlcNAc...) asparagine glycan is attached at Asn-35. The chain crosses the membrane as a helical span at residues 54-71; sequence SPYVAVCCVVMAFSILFM. Residue Gln-72 is a topological domain, cytoplasmic.

This sequence belongs to the KISH family.

The protein localises to the golgi apparatus membrane. Its function is as follows. Involved in the early part of the secretory pathway. In Xenopus laevis (African clawed frog), this protein is Protein kish-A (tmem167a).